The chain runs to 87 residues: U1-theraphotoxin-Ct1a (87 aa).

The signal sequence occupies residues 1–23; sequence MKTFTLIAILTCAVLVIFHAAAA. Residues 24 to 48 constitute a propeptide that is removed on maturation; the sequence is EELEVQDVIQPEDTLTGLATLDEDR.

This sequence belongs to the neurotoxin 12 (Hwtx-2) family. 03 (juruin) subfamily. Contains 3 disulfide bonds. Two different connectivities are observed in similar proteins (C1-C3, C2-C5, C4-C6 or C1-C4, C2-C5, C3-C6). Expressed by the venom gland.

It localises to the secreted. In terms of biological role, this toxin causes paralysis and death to sheep blowflies. It may inhibit voltage-gated calcium channels. In Coremiocnemis tropix (Australian tarantula spider), this protein is U1-theraphotoxin-Ct1a.